The chain runs to 438 residues: MEITVIASSSIDEGIGSWDLKTGTEQLQFKPCASPAHGLTAVGEKFLASSQLSARNTSGSIFYWSWTKPQAEVKSYPVEPIKALAANNEGTYLVGGGISGDIYLWEVATGKLLKKWHGHYRSVTCLVFSGDDSLLVSGSQDGSIRVWSLIRLFDDFQRQQGNTLYEHNFNEHTMSVTDIVIDYGGCNAVIISSSEDRTCKVWSLSRGKLLKNIIFPSVINALALDPGGCVFYAGARDSKIYIGAINATSEYGTQVLGSVSEKGKAITCLAYCADGNLLISGSEDGVVCVWDPKSLRHVRTLIHAKGSRKGPVNNIQIVRKTIVANSNKTQVSWKSRGALIPPPLEKYERPVEDTMDGIVTVDPPPFSDVPVYSSFLSADLIDEQVKELQQQGSAATEMEMERLKLEYKRSLQMNEQWQKNYENLLQVVMEEEQIGGTN.

6 WD repeats span residues 36 to 74 (AHGL…AEVK), 76 to 115 (YPVE…LLKK), 118 to 157 (GHYR…DDFQ), 171 to 212 (EHTM…LLKN), 214 to 253 (IFPS…EYGT), and 261 to 300 (EKGK…HVRT). A coiled-coil region spans residues 394–434 (AATEMEMERLKLEYKRSLQMNEQWQKNYENLLQVVMEEEQI).

In terms of biological role, involved in meristem development. Acts as a negative regulator of the CUC-STM pathway in shoot apical meristem (SAM) neo-formation. The sequence is that of Protein ROOT INITIATION DEFECTIVE 3 (RID3) from Arabidopsis thaliana (Mouse-ear cress).